We begin with the raw amino-acid sequence, 314 residues long: GTPase Era (314 aa).

The region spanning Lys-21 to Pro-189 is the Era-type G domain. The G1 stretch occupies residues Gly-29–Ser-36. Gly-29–Ser-36 provides a ligand contact to GTP. Residues Gln-55–Asn-59 are G2. The tract at residues Asp-76 to Gly-79 is G3. GTP is bound by residues Asp-76–Ile-80 and Asn-138–Asp-141. Residues Asn-138 to Asp-141 are G4. The tract at residues Phe-168–Ala-170 is G5. In terms of domain architecture, KH type-2 spans Ile-212–Pro-296.

This sequence belongs to the TRAFAC class TrmE-Era-EngA-EngB-Septin-like GTPase superfamily. Era GTPase family. In terms of assembly, monomer.

Its subcellular location is the cytoplasm. It is found in the cell inner membrane. Functionally, an essential GTPase that binds both GDP and GTP, with rapid nucleotide exchange. Plays a role in 16S rRNA processing and 30S ribosomal subunit biogenesis and possibly also in cell cycle regulation and energy metabolism. This is GTPase Era from Rippkaea orientalis (strain PCC 8801 / RF-1) (Cyanothece sp. (strain PCC 8801)).